The following is a 231-amino-acid chain: Cytidylate kinase (231 aa).

Residue G18 to S26 participates in ATP binding.

This sequence belongs to the cytidylate kinase family. Type 1 subfamily.

Its subcellular location is the cytoplasm. It carries out the reaction CMP + ATP = CDP + ADP. The enzyme catalyses dCMP + ATP = dCDP + ADP. The protein is Cytidylate kinase of Streptomyces avermitilis (strain ATCC 31267 / DSM 46492 / JCM 5070 / NBRC 14893 / NCIMB 12804 / NRRL 8165 / MA-4680).